The sequence spans 145 residues: Large ribosomal subunit protein uL11 (145 aa).

It belongs to the universal ribosomal protein uL11 family. As to quaternary structure, part of the ribosomal stalk of the 50S ribosomal subunit. Interacts with L10 and the large rRNA to form the base of the stalk. L10 forms an elongated spine to which L12 dimers bind in a sequential fashion forming a multimeric L10(L12)X complex. Post-translationally, one or more lysine residues are methylated.

Its function is as follows. Forms part of the ribosomal stalk which helps the ribosome interact with GTP-bound translation factors. This chain is Large ribosomal subunit protein uL11, found in Rickettsia akari (strain Hartford).